The sequence spans 1460 residues: Nonribosomal peptide synthetase 6 (1460 aa).

The segment at 63–468 (EQAALHPEKI…GRQDQQVKLR (406 aa)) is adenylation. Residues 600 to 675 (EPTTEMEIKL…AMATKIKPLS (76 aa)) form the Carrier 1 domain. Position 636 is an O-(pantetheine 4'-phosphoryl)serine (Ser-636). Residues 712 to 1135 (VQDVYPCTPL…AVLDPSEAQD (424 aa)) are condensation. 2 consecutive Carrier domains span residues 1168 to 1241 (SPNE…GNEK) and 1236 to 1312 (SIGN…EETD). 2 positions are modified to O-(pantetheine 4'-phosphoryl)serine: Ser-1202 and Ser-1273. A disordered region spans residues 1303–1324 (ELASSAEETDSPQTETNSNAPY). A compositionally biased stretch (polar residues) spans 1313–1322 (SPQTETNSNA).

It belongs to the NRP synthetase family.

The protein operates within siderophore biosynthesis. Its function is as follows. NRPS involved in extracellular coprogen-type siderophores biosynthesis. The role of extracellular siderophores in fungal virulence to plants is to supply iron to the fungus during plant infection, but not to act as phytotoxins, depriving their hosts of iron. In Alternaria brassicicola (Dark leaf spot agent), this protein is Nonribosomal peptide synthetase 6.